The primary structure comprises 218 residues: Flagellar calcium-binding protein TB-24 (218 aa).

The segment at 1–27 is disordered; that stretch reads MGCSASKDTTNSKDGAASKGGKDGKTT. EF-hand domains follow at residues 48 to 83, 84 to 119, 130 to 165, and 167 to 202; these read ESKS…ILKL, DEFT…LVEF, YDIF…LKEW, and VDIT…KKLQ. Ca(2+)-binding residues include Asp-61, Asn-63, Thr-65, Lys-67, and Glu-72. Ca(2+) contacts are provided by Asp-143, Asp-145, Ser-147, Glu-154, Asp-180, Asn-182, Ser-184, and Glu-191.

The protein belongs to the calflagin family.

It localises to the cell projection. It is found in the cilium. Its subcellular location is the flagellum. Its function is as follows. May contribute to the rapid motility of the trypanosomes, playing a role either in flagellar structure or in calcium metabolism. Could alternate between a GDP-bound inactive form to a calcium/GTP-bound active form. The sequence is that of Flagellar calcium-binding protein TB-24 from Trypanosoma brucei brucei.